Reading from the N-terminus, the 1139-residue chain is DNA-directed RNA polymerase subunit beta (1139 aa).

Positions 1085-1139 are disordered; sequence ADTSNRHTPSRPTYESVTSEDLSPSPAFTRVLRTADANASRSLEEDEDEEEEEDF. A compositionally biased stretch (polar residues) spans 1086 to 1106; it reads DTSNRHTPSRPTYESVTSEDL. The span at 1128 to 1139 shows a compositional bias: acidic residues; it reads EEDEDEEEEEDF.

The protein belongs to the RNA polymerase beta chain family. In cyanobacteria the RNAP catalytic core is composed of 2 alpha, 1 beta, 1 beta', 1 gamma and 1 omega subunit. When a sigma factor is associated with the core the holoenzyme is formed, which can initiate transcription.

The enzyme catalyses RNA(n) + a ribonucleoside 5'-triphosphate = RNA(n+1) + diphosphate. Its function is as follows. DNA-dependent RNA polymerase catalyzes the transcription of DNA into RNA using the four ribonucleoside triphosphates as substrates. This is DNA-directed RNA polymerase subunit beta from Synechococcus sp. (strain JA-2-3B'a(2-13)) (Cyanobacteria bacterium Yellowstone B-Prime).